A 369-amino-acid polypeptide reads, in one-letter code: RAB6-interacting golgin (369 aa).

The interval 1 to 128 is disordered; sequence MAQGWAGFSE…HNNVEILPPK (128 aa). The segment covering 11–27 has biased composition (basic and acidic residues); sequence EELRRLKQTKDPFEPQR. Polar residues-rich tracts occupy residues 46-61 and 82-93; these read EQSQKLGLQDGSTSLL and SPTLPSHFTLTS. Residues 106-120 are compositionally biased toward basic and acidic residues; sequence QPKELGLENSHDGHN. A coiled-coil region spans residues 145–297; the sequence is RWEVLQQEQR…EVERLLHEQE (153 aa). The necessary for interaction with RCHY1 stretch occupies residues 188-369; sequence IQKELQALDD…GNDISAALAT (182 aa). Residues 334 to 369 are disordered; it reads VSPKVDDQCGNSSSIPFLSPNCPNQEGNDISAALAT. Residues 342 to 361 show a composition bias toward polar residues; that stretch reads CGNSSSIPFLSPNCPNQEGN.

Belongs to the GORAB family. Interacts with SCYL1. Interacts with RCHY1 and RAB6A/RAB6.

Its subcellular location is the cytoplasm. The protein resides in the golgi apparatus. The sequence is that of RAB6-interacting golgin (GORAB) from Homo sapiens (Human).